The chain runs to 553 residues: CTP synthase (553 aa).

An amidoligase domain region spans residues M1 to L278. Residue S25 coordinates CTP. Residue S25 coordinates UTP. Residues S26–L31 and D83 contribute to the ATP site. D83 and E152 together coordinate Mg(2+). CTP is bound by residues D159–E161, K199–Q204, and K235. UTP-binding positions include K199–Q204 and K235. Positions N303–A552 constitute a Glutamine amidotransferase type-1 domain. G366 contacts L-glutamine. The active-site Nucleophile; for glutamine hydrolysis is C393. Residues L394–Q397, E417, and R478 each bind L-glutamine. Residues H525 and E527 contribute to the active site.

This sequence belongs to the CTP synthase family. Homotetramer.

The catalysed reaction is UTP + L-glutamine + ATP + H2O = CTP + L-glutamate + ADP + phosphate + 2 H(+). It catalyses the reaction L-glutamine + H2O = L-glutamate + NH4(+). The enzyme catalyses UTP + NH4(+) + ATP = CTP + ADP + phosphate + 2 H(+). Its pathway is pyrimidine metabolism; CTP biosynthesis via de novo pathway; CTP from UDP: step 2/2. Its activity is regulated as follows. Allosterically activated by GTP, when glutamine is the substrate; GTP has no effect on the reaction when ammonia is the substrate. The allosteric effector GTP functions by stabilizing the protein conformation that binds the tetrahedral intermediate(s) formed during glutamine hydrolysis. Inhibited by the product CTP, via allosteric rather than competitive inhibition. In terms of biological role, catalyzes the ATP-dependent amination of UTP to CTP with either L-glutamine or ammonia as the source of nitrogen. Regulates intracellular CTP levels through interactions with the four ribonucleotide triphosphates. The polypeptide is CTP synthase (Bifidobacterium longum (strain NCC 2705)).